A 319-amino-acid polypeptide reads, in one-letter code: Transcription factor STKL2 (319 aa).

The disordered stretch occupies residues 1–119; the sequence is MAPLESPATA…NKKANPQRVW (119 aa). Residues 21–34 show a composition bias toward basic and acidic residues; sequence EIFKSSSEESKPKD. The span at 38 to 55 shows a compositional bias: polar residues; the sequence is VPSSKTLKSPSAAVNSKT. Residues 89–112 are compositionally biased toward basic and acidic residues; that stretch reads RAGEGSTSRDMHVKRVKKEDDNKK.

The protein belongs to the GeBP family. Expressed strongly in leaves and flowers, weakly in roots, and very weakly in stems.

The protein resides in the nucleus. Its function is as follows. Transcription repressor that binds DNA in a sequence-specific manner, 5'-GCCT-3', to regulate the expression of PGR. Acts as a modulatory component for the glucose-triggered developmental leaf growth process. This chain is Transcription factor STKL2, found in Arabidopsis thaliana (Mouse-ear cress).